A 326-amino-acid polypeptide reads, in one-letter code: N-acetyl-gamma-glutamyl-phosphate reductase (326 aa).

Cys-155 is a catalytic residue.

Belongs to the NAGSA dehydrogenase family. Type 1 subfamily.

The protein localises to the cytoplasm. The enzyme catalyses N-acetyl-L-glutamate 5-semialdehyde + phosphate + NADP(+) = N-acetyl-L-glutamyl 5-phosphate + NADPH + H(+). Its pathway is amino-acid biosynthesis; L-arginine biosynthesis; N(2)-acetyl-L-ornithine from L-glutamate: step 3/4. Its function is as follows. Catalyzes the NADPH-dependent reduction of N-acetyl-5-glutamyl phosphate to yield N-acetyl-L-glutamate 5-semialdehyde. The protein is N-acetyl-gamma-glutamyl-phosphate reductase of Shewanella sediminis (strain HAW-EB3).